We begin with the raw amino-acid sequence, 141 residues long: Large ribosomal subunit protein uL11 (141 aa).

This sequence belongs to the universal ribosomal protein uL11 family. As to quaternary structure, part of the ribosomal stalk of the 50S ribosomal subunit. Interacts with L10 and the large rRNA to form the base of the stalk. L10 forms an elongated spine to which L12 dimers bind in a sequential fashion forming a multimeric L10(L12)X complex. Post-translationally, one or more lysine residues are methylated.

Functionally, forms part of the ribosomal stalk which helps the ribosome interact with GTP-bound translation factors. The polypeptide is Large ribosomal subunit protein uL11 (Streptococcus suis (strain 98HAH33)).